A 249-amino-acid polypeptide reads, in one-letter code: U1 small nuclear ribonucleoprotein usp102 (249 aa).

Residues 1-25 form a disordered region; sequence MDPQTNSHQEVQQPSPKETDSQTPS. The region spanning 26 to 105 is the RRM 1 domain; that stretch reads ETLYIRNIEE…KPMMIQYSKS (80 aa). Residues 113–157 are disordered; the sequence is RESPEEIETRKKDRKNRREMLKRTSALQPAAPKPTHKKPVPKRNV. Over residues 114 to 134 the composition is skewed to basic and acidic residues; sequence ESPEEIETRKKDRKNRREMLK. Residues 174–247 form the RRM 2 domain; sequence KVLLLQNIPQ…NQIKVTFARK (74 aa).

Belongs to the RRM U1 A/B'' family. As to quaternary structure, component of the spliceosome where it is associated with snRNP U1.

It localises to the nucleus. The protein localises to the nucleolus. In terms of biological role, involved in nuclear mRNA splicing. This is U1 small nuclear ribonucleoprotein usp102 from Schizosaccharomyces pombe (strain 972 / ATCC 24843) (Fission yeast).